Reading from the N-terminus, the 407-residue chain is Protein FAM53B (407 aa).

2 disordered regions span residues 204–286 (SSSM…RPSL) and 306–380 (ITGE…DTEP). Composition is skewed to basic and acidic residues over residues 264–281 (LNEKKIGVKRRRPDDTHK) and 327–339 (DAVDSPAHEHNLK). The short motif at 272-275 (KRRR) is the Nuclear localization signal element. Over residues 357-369 (ITEEVDWNCDDGT) the composition is skewed to acidic residues.

The protein belongs to the FAM53 family. Interacts with ctnnb1. Predominantly expressed in proliferating cells throughout embryonic development.

Its subcellular location is the nucleus. Its function is as follows. Acts as a regulator of Wnt signaling pathway by regulating beta-catenin (ctnnb1) nuclear localization. The protein is Protein FAM53B of Oryzias latipes (Japanese rice fish).